The sequence spans 191 residues: UPF0312 protein SO_3370 (191 aa).

The N-terminal stretch at 1–22 (MKKQLFSALIGASLFAPMAVSA) is a signal peptide.

This sequence belongs to the UPF0312 family. Type 1 subfamily.

Its subcellular location is the periplasm. This Shewanella oneidensis (strain ATCC 700550 / JCM 31522 / CIP 106686 / LMG 19005 / NCIMB 14063 / MR-1) protein is UPF0312 protein SO_3370.